Here is a 134-residue protein sequence, read N- to C-terminus: Putative pre-16S rRNA nuclease (134 aa).

Belongs to the YqgF nuclease family.

Its subcellular location is the cytoplasm. Could be a nuclease involved in processing of the 5'-end of pre-16S rRNA. The chain is Putative pre-16S rRNA nuclease from Helicobacter pylori (strain Shi470).